A 445-amino-acid polypeptide reads, in one-letter code: ATP synthase subunit b-delta (445 aa).

Positions 1–168 (MSIFIGQLIG…PSSVVIDTAA (168 aa)) are ATP synthase subunit b. A helical membrane pass occupies residues 3-23 (IFIGQLIGFAVIAFIIVKWVV). The ATP synthase subunit delta stretch occupies residues 169–445 (TSRLRAASRQ…LAAAQTGLPD (277 aa)).

In the N-terminal section; belongs to the ATPase B chain family. The protein in the C-terminal section; belongs to the ATPase delta chain family. As to quaternary structure, F-type ATPases have 2 components, F(1) - the catalytic core - and F(0) - the membrane proton channel. F(1) has five subunits: alpha(3), beta(3), gamma(1), delta(1), epsilon(1). F(0) has three main subunits: a(1), b(2) and c(10-14). The alpha and beta chains form an alternating ring which encloses part of the gamma chain. F(1) is attached to F(0) by a central stalk formed by the gamma and epsilon chains, while a peripheral stalk is formed by the delta and b chains.

The protein localises to the cell membrane. In terms of biological role, f(1)F(0) ATP synthase produces ATP from ADP in the presence of a proton or sodium gradient. F-type ATPases consist of two structural domains, F(1) containing the extramembraneous catalytic core and F(0) containing the membrane proton channel, linked together by a central stalk and a peripheral stalk. During catalysis, ATP synthesis in the catalytic domain of F(1) is coupled via a rotary mechanism of the central stalk subunits to proton translocation. Its function is as follows. This fusion protein includes a component of the F(0) channel (subunit b) and of the F(1) subunit (subunit delta). Two copies of subunit b and one of delta together form the peripheral 'stator' stalk which links F(1) to F(0). The chain is ATP synthase subunit b-delta (atpFH) from Mycolicibacterium smegmatis (strain ATCC 700084 / mc(2)155) (Mycobacterium smegmatis).